We begin with the raw amino-acid sequence, 334 residues long: Holliday junction branch migration complex subunit RuvB (334 aa).

A large ATPase domain (RuvB-L) region spans residues 4–184 (ADRLIAADAQ…FGIVQRLEFY (181 aa)). ATP contacts are provided by residues I23, R24, G65, K68, T69, T70, 131 to 133 (EDY), R174, Y184, and R221. Position 69 (T69) interacts with Mg(2+). The small ATPAse domain (RuvB-S) stretch occupies residues 185–255 (QVADLQHIVG…VAAQALNMLD (71 aa)). A head domain (RuvB-H) region spans residues 258–334 (AAGFDYMDRK…YQHFGIDRAE (77 aa)). The DNA site is built by R294, R313, and R318.

It belongs to the RuvB family. In terms of assembly, homohexamer. Forms an RuvA(8)-RuvB(12)-Holliday junction (HJ) complex. HJ DNA is sandwiched between 2 RuvA tetramers; dsDNA enters through RuvA and exits via RuvB. An RuvB hexamer assembles on each DNA strand where it exits the tetramer. Each RuvB hexamer is contacted by two RuvA subunits (via domain III) on 2 adjacent RuvB subunits; this complex drives branch migration. In the full resolvosome a probable DNA-RuvA(4)-RuvB(12)-RuvC(2) complex forms which resolves the HJ.

Its subcellular location is the cytoplasm. It carries out the reaction ATP + H2O = ADP + phosphate + H(+). In terms of biological role, the RuvA-RuvB-RuvC complex processes Holliday junction (HJ) DNA during genetic recombination and DNA repair, while the RuvA-RuvB complex plays an important role in the rescue of blocked DNA replication forks via replication fork reversal (RFR). RuvA specifically binds to HJ cruciform DNA, conferring on it an open structure. The RuvB hexamer acts as an ATP-dependent pump, pulling dsDNA into and through the RuvAB complex. RuvB forms 2 homohexamers on either side of HJ DNA bound by 1 or 2 RuvA tetramers; 4 subunits per hexamer contact DNA at a time. Coordinated motions by a converter formed by DNA-disengaged RuvB subunits stimulates ATP hydrolysis and nucleotide exchange. Immobilization of the converter enables RuvB to convert the ATP-contained energy into a lever motion, pulling 2 nucleotides of DNA out of the RuvA tetramer per ATP hydrolyzed, thus driving DNA branch migration. The RuvB motors rotate together with the DNA substrate, which together with the progressing nucleotide cycle form the mechanistic basis for DNA recombination by continuous HJ branch migration. Branch migration allows RuvC to scan DNA until it finds its consensus sequence, where it cleaves and resolves cruciform DNA. The sequence is that of Holliday junction branch migration complex subunit RuvB from Edwardsiella ictaluri (strain 93-146).